The primary structure comprises 52 residues: Protein YabQ (52 aa).

Identified as a multicopy suppressor of the slow growth phenotype of an rsgA (yjeQ) deletion mutant. The sequence is that of Protein YabQ (yabQ) from Escherichia coli (strain K12).